The primary structure comprises 538 residues: Syncytin-2 (538 aa).

The signal sequence occupies residues 1–15 (MGLLLLVLILTPSLA). Over 16-478 (AYRHPDFPLL…GWLNWEGTWK (463 aa)) the chain is Extracellular. Positions 43–46 (CWLC) match the CXXC motif. 3 disulfide bridges follow: Cys-43-Cys-46, Cys-43-Cys-439, and Cys-431-Cys-438. N-linked (GlcNAc...) asparagine glycans are attached at residues Asn-133, Asn-146, Asn-177, Asn-220, Asn-241, Asn-247, Asn-312, and Asn-332. Positions 354-374 (FIPLLAGLGILAGTGTGIAGI) are fusion peptide. Positions 414–430 (LQNRRGLDMLTAAQGGI) match the CKS-17 motif. Residues 431-439 (CLALDEKCC) carry the CX6CC motif. A glycan (N-linked (GlcNAc...) asparagine) is linked at Asn-443. The chain crosses the membrane as a helical span at residues 479 to 499 (WFSWVLPLTGPLVSLLLLLLF). The Cytoplasmic portion of the chain corresponds to 500-538 (GPCLLNLITQFVSSRLQAIKLQTNLSAGRHPRNIQESPF).

This sequence belongs to the gamma type-C retroviral envelope protein family. HERV class-I FRD env subfamily. The surface and transmembrane proteins form a heterodimer. They are attached by non-covalent interactions or by a labile interchain disulfide bond. Specific enzymatic cleavages in vivo yield the mature SU and TM proteins. Post-translationally, the CXXC motif is highly conserved across a broad range of retroviral envelope proteins. It is thought to participate in the formation of a labile disulfide bond possibly with the CX6CC motif present in the transmembrane protein.

It localises to the virion. The protein localises to the cell membrane. Its function is as follows. This endogenous retroviral envelope protein has retained its original fusogenic properties and participates in trophoblast fusion and the formation of a syncytium during placenta morphogenesis. The interaction with MFSD2A is apparently important for this process. Functionally, endogenous envelope proteins may have kept, lost or modified their original function during evolution but this one can still make pseudotypes with MLV, HIV-1 or SIV-1 virions and confer infectivity. Retroviral envelope proteins mediate receptor recognition and membrane fusion during early infection. The surface protein mediates receptor recognition, while the transmembrane protein anchors the envelope heterodimer to the viral membrane through one transmembrane domain. The other hydrophobic domain, called fusion peptide, mediates fusion of the viral membrane with the target cell membrane. The protein is Syncytin-2 (ERVFRD-1) of Pan troglodytes (Chimpanzee).